The primary structure comprises 2605 residues: Non-reducing polyketide synthase dbaI (2605 aa).

An N-terminal acylcarrier protein transacylase domain (SAT) region spans residues 97–243 (PNTLLIPLVM…PASEISDLHR (147 aa)). Residue Cys144 is the Nucleophile; for transacylase activity of the active site. The active-site Proton donor/acceptor; for transacylase activity is the His262. Residues 382-798 (ENDIAVVGMS…GSNASIVVTQ (417 aa)) form the Ketosynthase family 3 (KS3) domain. Catalysis depends on for beta-ketoacyl synthase activity residues Cys547, His682, and His721. Residues 908–1195 (FGGQVSTFVG…VTNMASRALG (288 aa)) form a malonyl-CoA:ACP transacylase (MAT) domain region. The N-terminal hotdog fold stretch occupies residues 1285–1420 (PNTLLTFVGY…GRVIFRSISD (136 aa)). The PKS/mFAS DH domain occupies 1285 to 1596 (PNTLLTFVGY…YVKIPKASMS (312 aa)). A product template (PT) domain region spans residues 1316–1594 (LIRGHIIAQT…ISYVKIPKAS (279 aa)). Residue His1320 is the Proton acceptor; for dehydratase activity of the active site. The C-terminal hotdog fold stretch occupies residues 1447–1596 (EVDEVLQNRN…YVKIPKASMS (150 aa)). Residue Asp1504 is the Proton donor; for dehydratase activity of the active site. In terms of domain architecture, Carrier spans 1665–1739 (GQLTQRIKSI…SLIKCVRKAM (75 aa)). Ser1699 is subject to O-(pantetheine 4'-phosphoryl)serine. The segment at 1742–1780 (DADSAEYTTEQSTSEAADSDDKSTNYTTPSTPGEEALDM) is disordered. A compositionally biased stretch (polar residues) spans 1747-1757 (EYTTEQSTSEA). The segment at 1963-2151 (DWPLNRLFYR…VGYGHVDWTD (189 aa)) is methyltransferase domain. Positions 2230–2473 (VTGATGSLGC…LSWTPVDVVA (244 aa)) are NADPH-binding (R) domain.

The enzyme catalyses 4 malonyl-CoA + acetyl-CoA + AH2 + S-adenosyl-L-methionine + 3 H(+) = 2,4-dihydroxy-3-methyl-6-(2-oxopropyl)benzaldehyde + A + S-adenosyl-L-homocysteine + 4 CO2 + 5 CoA + H2O. Its pathway is secondary metabolite biosynthesis. Functionally, non-reducing polyketide synthase; part of the gene cluster that mediates the biosynthesis of the antibiotic 2,4-dihydroxy-3-methyl-6-(2-oxopropyl)benzaldehyde (DHMBA) and its derivatives. The direct non-reducing polyketide synthase dbaI product is 2,4-dihydroxy-3-methyl-6-(2-oxopropyl)benzaldehyde (DHMBA), produced by condensation of one acetyl-CoA starter unit with 4 malonyl-CoA units and one methylation step. The FAD-dependent monooxygenase dbaH is responsible for the synthesis of yellow pigments derived from the oxidation of DHMBA. The roles of dbaB, C, E and F have still to be determined. The sequence is that of Non-reducing polyketide synthase dbaI from Emericella nidulans (strain FGSC A4 / ATCC 38163 / CBS 112.46 / NRRL 194 / M139) (Aspergillus nidulans).